The primary structure comprises 137 residues: Ribosomal RNA large subunit methyltransferase H (137 aa).

Residues L56, G85, and 104–109 each bind S-adenosyl-L-methionine; that span reads LSPLTL.

Belongs to the RNA methyltransferase RlmH family. As to quaternary structure, homodimer.

The protein resides in the cytoplasm. The catalysed reaction is pseudouridine(1915) in 23S rRNA + S-adenosyl-L-methionine = N(3)-methylpseudouridine(1915) in 23S rRNA + S-adenosyl-L-homocysteine + H(+). Its function is as follows. Specifically methylates the pseudouridine at position 1915 (m3Psi1915) in 23S rRNA. In Thermus thermophilus (strain ATCC BAA-163 / DSM 7039 / HB27), this protein is Ribosomal RNA large subunit methyltransferase H.